The following is a 63-amino-acid chain: MNNKINNIKITQIKSAIGCKYDQRFTLIGLGLNKINKSVILKNTNSIRGMVEKVKHLLKIENM.

It belongs to the universal ribosomal protein uL30 family. Part of the 50S ribosomal subunit.

The sequence is that of Large ribosomal subunit protein uL30 from Rickettsia prowazekii (strain Madrid E).